The sequence spans 273 residues: UPF0380 protein YafZ (273 aa).

The protein belongs to the UPF0380 family.

The protein is UPF0380 protein YafZ (yafZ) of Escherichia coli (strain K12).